The primary structure comprises 571 residues: uncharacterized protein (571 aa).

Disordered regions lie at residues 71–128 (TNHY…RVTA), 142–258 (NKND…PQNE), and 298–336 (LNRQ…TTKR). The segment covering 88–113 (PNRSGVSSPVNDGASSPTQRGGTTPA) has biased composition (polar residues). Residues 168-184 (RGYPGPGPRGYPGPGPR) show a composition bias toward pro residues. Over residues 205 to 215 (QGPRRYSCPGP) the composition is skewed to low complexity. Residues 217 to 234 (GYPGPGSSGRPDPGGGLQ) show a composition bias toward gly residues. Residues 311-326 (PEKQQTPPPEETQNAQ) show a composition bias toward low complexity.

This is an uncharacterized protein from Drosophila melanogaster (Fruit fly).